Consider the following 86-residue polypeptide: Small ribosomal subunit protein bS18 (86 aa).

The protein belongs to the bacterial ribosomal protein bS18 family. Part of the 30S ribosomal subunit. Forms a tight heterodimer with protein bS6.

In terms of biological role, binds as a heterodimer with protein bS6 to the central domain of the 16S rRNA, where it helps stabilize the platform of the 30S subunit. The protein is Small ribosomal subunit protein bS18 of Campylobacter lari (strain RM2100 / D67 / ATCC BAA-1060).